Here is a 397-residue protein sequence, read N- to C-terminus: Elongation factor Tu (397 aa).

Residues 10–206 (KPHVNIGTIG…AVDDNVPEPE (197 aa)) form the tr-type G domain. The tract at residues 19 to 26 (GHVDHGKT) is G1. A GTP-binding site is contributed by 19-26 (GHVDHGKT). Thr-26 serves as a coordination point for Mg(2+). Residues 62–66 (GITIN) form a G2 region. Residues 83–86 (DAPG) are G3. Residues 83–87 (DAPGH) and 138–141 (NKSD) contribute to the GTP site. The tract at residues 138-141 (NKSD) is G4. The G5 stretch occupies residues 176-178 (SAL).

It belongs to the TRAFAC class translation factor GTPase superfamily. Classic translation factor GTPase family. EF-Tu/EF-1A subfamily. Monomer.

Its subcellular location is the cytoplasm. The catalysed reaction is GTP + H2O = GDP + phosphate + H(+). Functionally, GTP hydrolase that promotes the GTP-dependent binding of aminoacyl-tRNA to the A-site of ribosomes during protein biosynthesis. This is Elongation factor Tu from Brevibacterium linens.